A 90-amino-acid chain; its full sequence is Protein S100-A6 (90 aa).

EF-hand domains are found at residues 12-47 (LVAIFHKYSGREGDKHTLSKKELKELIQKELTIGSK) and 48-83 (LQDAEIARLMEDLDRNKDQEVNFQEYVTFLGALALI). Thr28 and Glu33 together coordinate Ca(2+). Lys40 is subject to N6-acetyllysine. A Phosphoserine modification is found at Ser46. An N6-acetyllysine; alternate modification is found at Lys47. Position 47 is an N6-succinyllysine; alternate (Lys47). Asp61, Asn63, Asp65, Glu67, and Glu72 together coordinate Ca(2+).

This sequence belongs to the S-100 family. As to quaternary structure, homodimer; head to tail assembly of 2 subunits. Interacts with CACYBP in a calcium-dependent manner. Interacts with ANXA2 and ANXA11 (via N-terminus). Interacts with SUGT1. Interacts with TP53; has higher affinity for TP53 that is phosphorylated on its N-terminal domain, and lower affinity for TP53 that is phosphorylated on its C-terminal domain. Interacts with tropomyosin. Interacts with FKBP4. Interacts with PPP5C (via TPR repeats); the interaction is calcium-dependent and modulates PPP5C activity. Interacts with TPPP; this interaction inhibits TPPP dimerization. Post-translationally, the N-terminus is blocked.

It is found in the nucleus envelope. Its subcellular location is the cytoplasm. The protein localises to the cell membrane. May function as calcium sensor and modulator, contributing to cellular calcium signaling. May function by interacting with other proteins, such as TPR-containing proteins, and indirectly play a role in many physiological processes such as the reorganization of the actin cytoskeleton and in cell motility. Binds 2 calcium ions. Calcium binding is cooperative. The chain is Protein S100-A6 (S100A6) from Homo sapiens (Human).